A 128-amino-acid chain; its full sequence is MKQQVEVKDLKEGKYVIIDDEACVIKSISKSKPGKHGAAKARVEAIGLFDNQKRSYIGSVANKIYVPIVERKSAQVISITGDIAQLMDMGDFSTFEIVIPDEYKDKVKEGEEVSYITALGKIKLDIRT.

Lysine 35 carries the hypusine modification.

Belongs to the eIF-5A family.

The protein localises to the cytoplasm. Functions by promoting the formation of the first peptide bond. This chain is Translation initiation factor 5A (eif5a), found in Methanosarcina acetivorans (strain ATCC 35395 / DSM 2834 / JCM 12185 / C2A).